Reading from the N-terminus, the 273-residue chain is Shikimate dehydrogenase (NADP(+)) (273 aa).

Shikimate contacts are provided by residues 15–17 (SKS) and threonine 62. Residue lysine 66 is the Proton acceptor of the active site. Residue glutamate 78 coordinates NADP(+). Asparagine 87 and aspartate 103 together coordinate shikimate. Residues 127-131 (GAGGA), 151-156 (NRTHDK), and methionine 214 each bind NADP(+). Shikimate is bound at residue tyrosine 216. Glycine 238 is a binding site for NADP(+).

Belongs to the shikimate dehydrogenase family. Homodimer.

The enzyme catalyses shikimate + NADP(+) = 3-dehydroshikimate + NADPH + H(+). It participates in metabolic intermediate biosynthesis; chorismate biosynthesis; chorismate from D-erythrose 4-phosphate and phosphoenolpyruvate: step 4/7. Functionally, involved in the biosynthesis of the chorismate, which leads to the biosynthesis of aromatic amino acids. Catalyzes the reversible NADPH linked reduction of 3-dehydroshikimate (DHSA) to yield shikimate (SA). In Shewanella denitrificans (strain OS217 / ATCC BAA-1090 / DSM 15013), this protein is Shikimate dehydrogenase (NADP(+)).